Here is a 513-residue protein sequence, read N- to C-terminus: ATP synthase subunit alpha (513 aa).

ATP is bound at residue 169–176 (GDRQTGKT).

The protein belongs to the ATPase alpha/beta chains family. As to quaternary structure, F-type ATPases have 2 components, CF(1) - the catalytic core - and CF(0) - the membrane proton channel. CF(1) has five subunits: alpha(3), beta(3), gamma(1), delta(1), epsilon(1). CF(0) has three main subunits: a(1), b(2) and c(9-12). The alpha and beta chains form an alternating ring which encloses part of the gamma chain. CF(1) is attached to CF(0) by a central stalk formed by the gamma and epsilon chains, while a peripheral stalk is formed by the delta and b chains.

It is found in the cell inner membrane. The enzyme catalyses ATP + H2O + 4 H(+)(in) = ADP + phosphate + 5 H(+)(out). Functionally, produces ATP from ADP in the presence of a proton gradient across the membrane. The alpha chain is a regulatory subunit. In Klebsiella pneumoniae (strain 342), this protein is ATP synthase subunit alpha.